The sequence spans 604 residues: Glutamine--fructose-6-phosphate aminotransferase [isomerizing] (604 aa).

The active-site Nucleophile; for GATase activity is Cys-2. A Glutamine amidotransferase type-2 domain is found at 2-218 (CGIVGVVGNT…DKELVIVKKD (217 aa)). SIS domains are found at residues 284–423 (IIKS…ANGK) and 456–594 (VEQL…VDKP). Lys-599 (for Fru-6P isomerization activity) is an active-site residue.

In terms of assembly, homodimer.

The protein localises to the cytoplasm. It carries out the reaction D-fructose 6-phosphate + L-glutamine = D-glucosamine 6-phosphate + L-glutamate. Its function is as follows. Catalyzes the first step in hexosamine metabolism, converting fructose-6P into glucosamine-6P using glutamine as a nitrogen source. This Streptococcus agalactiae serotype III (strain NEM316) protein is Glutamine--fructose-6-phosphate aminotransferase [isomerizing].